Consider the following 267-residue polypeptide: Hydroxyethylthiazole kinase (267 aa).

Met-48 lines the substrate pocket. ATP is bound by residues Arg-124 and Ser-170. Gly-197 provides a ligand contact to substrate.

This sequence belongs to the Thz kinase family. Mg(2+) is required as a cofactor.

It catalyses the reaction 5-(2-hydroxyethyl)-4-methylthiazole + ATP = 4-methyl-5-(2-phosphooxyethyl)-thiazole + ADP + H(+). The protein operates within cofactor biosynthesis; thiamine diphosphate biosynthesis; 4-methyl-5-(2-phosphoethyl)-thiazole from 5-(2-hydroxyethyl)-4-methylthiazole: step 1/1. Catalyzes the phosphorylation of the hydroxyl group of 4-methyl-5-beta-hydroxyethylthiazole (THZ). This Leptospira biflexa serovar Patoc (strain Patoc 1 / Ames) protein is Hydroxyethylthiazole kinase.